Here is a 483-residue protein sequence, read N- to C-terminus: (R)-mandelonitrile beta-glucosyltransferase (483 aa).

His22 serves as the catalytic Proton acceptor. Residue His22 participates in an anthocyanidin binding. Asp124 acts as the Charge relay in catalysis. Thr146, Gln363, His378, Trp381, Asn382, Ser383, and Glu386 together coordinate UDP-alpha-D-glucose. Ala401 is an an anthocyanidin binding site. Glu402 and Gln403 together coordinate UDP-alpha-D-glucose.

This sequence belongs to the UDP-glycosyltransferase family.

It carries out the reaction (R)-mandelonitrile + UDP-alpha-D-glucose = (R)-prunasin + UDP + H(+). Its function is as follows. Involved in the biosynthesis of the cyanogenic glycoside (R)-prunasin, a precursor of (R)-amygdalin, which at high concentrations is associated with intense bitterness in kernels of almond. Stereo-selectively glucosylates (R)-mandelonitrile to produce (R)-prunasin. This Prunus dulcis (Almond) protein is (R)-mandelonitrile beta-glucosyltransferase.